The sequence spans 200 residues: 3-isopropylmalate dehydratase small subunit (200 aa).

Belongs to the LeuD family. LeuD type 1 subfamily. As to quaternary structure, heterodimer of LeuC and LeuD.

The enzyme catalyses (2R,3S)-3-isopropylmalate = (2S)-2-isopropylmalate. Its pathway is amino-acid biosynthesis; L-leucine biosynthesis; L-leucine from 3-methyl-2-oxobutanoate: step 2/4. Its function is as follows. Catalyzes the isomerization between 2-isopropylmalate and 3-isopropylmalate, via the formation of 2-isopropylmaleate. The sequence is that of 3-isopropylmalate dehydratase small subunit from Erythrobacter litoralis (strain HTCC2594).